Reading from the N-terminus, the 51-residue chain is ATP synthase subunit epsilon-like protein, mitochondrial (51 aa).

Lysine 21 is modified (N6-acetyllysine).

Belongs to the eukaryotic ATPase epsilon family. F-type ATPases have 2 components, CF(1) - the catalytic core - and CF(0) - the membrane proton channel. CF(1) has five subunits: alpha(3), beta(3), gamma(1), delta(1), epsilon(1). CF(0) seems to have nine subunits: a, b, c, d, e, f, g, F6 and 8 (or A6L).

It localises to the mitochondrion inner membrane. Mitochondrial membrane ATP synthase (F(1)F(0) ATP synthase or Complex V) produces ATP from ADP in the presence of a proton gradient across the membrane which is generated by electron transport complexes of the respiratory chain. F-type ATPases consist of two structural domains, F(1) - containing the extramembraneous catalytic core, and F(0) - containing the membrane proton channel, linked together by a central stalk and a peripheral stalk. During catalysis, ATP synthesis in the catalytic domain of F(1) is coupled via a rotary mechanism of the central stalk subunits to proton translocation. Part of the complex F(1) domain and of the central stalk which is part of the complex rotary element. Rotation of the central stalk against the surrounding alpha(3)beta(3) subunits leads to hydrolysis of ATP in three separate catalytic sites on the beta subunits. The sequence is that of ATP synthase subunit epsilon-like protein, mitochondrial from Homo sapiens (Human).